We begin with the raw amino-acid sequence, 313 residues long: 2-oxoglutarate-dependent dioxygenase eupC (313 aa).

One can recognise a Fe2OG dioxygenase domain in the interval 187–284 (PSIPMRFLHY…LNAKALDGSG (98 aa)). Residues histidine 212, aspartate 214, and histidine 263 each contribute to the Fe cation site. Position 274 (lysine 274) interacts with 2-oxoglutarate.

Belongs to the iron/ascorbate-dependent oxidoreductase family. It depends on Fe(2+) as a cofactor.

Its pathway is secondary metabolite biosynthesis; terpenoid biosynthesis. In terms of biological role, 2-oxoglutarate-dependent dioxygenase; part of the gene cluster that mediates the biosynthesis of eupenifeldin, a bistropolone meroterpenoid that acts as an antitumor agent. The first step of eupenifeldin biosynthesis is the biosynthesis of 3-methylorcinaldehyde performed by the non-reducing polyketide synthase eupA. Oxidative dearomatization of 3-methylorcinaldehyde likely catalyzed by the FAD-dependent monooxygenase eupB is followed by oxidative ring expansion by the 2-oxoglutarate-dependent dioxygenase eupC to provide the first tropolone metabolite, tropolone stipitaldehyde. In parallel, generation of sesquiterpene alpha-humulene from farnesylpyrophosphate (FPP) is catalyzed by the terpene cyclase eupE. The cytochrome P450 monooxygenase eupD then hydroxylates humulene to humulenol. The putative Diels-Alderase eupF probably catalyzes the formation of the tropolone-humulene skeleton by linking humulenol and the polyketide moiety. The short-chain dehydrogenase/reductase eupG and the flavin-dependent monooxygenase eupH are also essential for eupenifeldin biosynthesis and are likely the additional decorating enzymes of the tropolone-humulene skeleton to produce final eupenifeldin or derivatives. This chain is 2-oxoglutarate-dependent dioxygenase eupC, found in Phoma sp.